The primary structure comprises 209 residues: Large ribosomal subunit protein uL3 (209 aa).

The tract at residues 127–151 (SGGPSSHGSKFHRHLGGTGQATTPA) is disordered.

It belongs to the universal ribosomal protein uL3 family. As to quaternary structure, part of the 50S ribosomal subunit. Forms a cluster with proteins L14 and L19.

In terms of biological role, one of the primary rRNA binding proteins, it binds directly near the 3'-end of the 23S rRNA, where it nucleates assembly of the 50S subunit. This is Large ribosomal subunit protein uL3 from Borrelia turicatae (strain 91E135).